Here is a 340-residue protein sequence, read N- to C-terminus: L-threonine 3-dehydrogenase (340 aa).

Cys38 lines the Zn(2+) pocket. Catalysis depends on charge relay system residues Thr40 and His43. Residues His63, Glu64, Cys93, Cys96, Cys99, and Cys107 each contribute to the Zn(2+) site. NAD(+) contacts are provided by residues Ile175, Asp195, Arg200, 262–264 (LGI), and 286–287 (IY).

It belongs to the zinc-containing alcohol dehydrogenase family. In terms of assembly, homotetramer. Requires Zn(2+) as cofactor.

Its subcellular location is the cytoplasm. The catalysed reaction is L-threonine + NAD(+) = (2S)-2-amino-3-oxobutanoate + NADH + H(+). It functions in the pathway amino-acid degradation; L-threonine degradation via oxydo-reductase pathway; glycine from L-threonine: step 1/2. Catalyzes the NAD(+)-dependent oxidation of L-threonine to 2-amino-3-ketobutyrate. In Pseudoalteromonas atlantica (strain T6c / ATCC BAA-1087), this protein is L-threonine 3-dehydrogenase.